Reading from the N-terminus, the 208-residue chain is Uridine kinase (208 aa).

12-19 (GGSGGGKT) provides a ligand contact to ATP.

The protein belongs to the uridine kinase family.

The protein resides in the cytoplasm. The enzyme catalyses uridine + ATP = UMP + ADP + H(+). It carries out the reaction cytidine + ATP = CMP + ADP + H(+). Its pathway is pyrimidine metabolism; CTP biosynthesis via salvage pathway; CTP from cytidine: step 1/3. It functions in the pathway pyrimidine metabolism; UMP biosynthesis via salvage pathway; UMP from uridine: step 1/1. In Streptococcus pyogenes serotype M3 (strain ATCC BAA-595 / MGAS315), this protein is Uridine kinase.